The following is a 172-amino-acid chain: Nucleoside-triphosphatase THEP1 (172 aa).

ATP contacts are provided by residues 11–18 (GKPGIGKT) and 101–108 (IILIDEIG).

The protein belongs to the THEP1 NTPase family.

The enzyme catalyses a ribonucleoside 5'-triphosphate + H2O = a ribonucleoside 5'-diphosphate + phosphate + H(+). Functionally, has nucleotide phosphatase activity towards ATP, GTP, CTP, TTP and UTP. May hydrolyze nucleoside diphosphates with lower efficiency. The protein is Nucleoside-triphosphatase THEP1 of Sulfolobus acidocaldarius (strain ATCC 33909 / DSM 639 / JCM 8929 / NBRC 15157 / NCIMB 11770).